The chain runs to 126 residues: Large ribosomal subunit protein mL55 (126 aa).

The N-terminal 34 residues, 1 to 34 (MSAKGSLLRLLWQCGMTRAAPESCRYLYTSSWRA), are a transit peptide targeting the mitochondrion. S86 carries the post-translational modification Phosphoserine.

Belongs to the mitochondrion-specific ribosomal protein mL55 family. As to quaternary structure, component of the mitochondrial ribosome large subunit (39S) which comprises a 16S rRNA and about 50 distinct proteins.

It localises to the mitochondrion. The sequence is that of Large ribosomal subunit protein mL55 (MRPL55) from Bos taurus (Bovine).